The sequence spans 407 residues: Probable tRNA sulfurtransferase (407 aa).

The region spanning 61-165 is the THUMP domain; that stretch reads NEITNRLSKI…LDAIYMYEEV (105 aa). Residues 183–184, 208–209, Arg-265, Gly-287, and Gln-296 each bind ATP; these read ML and HF.

This sequence belongs to the ThiI family.

The protein localises to the cytoplasm. The catalysed reaction is [ThiI sulfur-carrier protein]-S-sulfanyl-L-cysteine + a uridine in tRNA + 2 reduced [2Fe-2S]-[ferredoxin] + ATP + H(+) = [ThiI sulfur-carrier protein]-L-cysteine + a 4-thiouridine in tRNA + 2 oxidized [2Fe-2S]-[ferredoxin] + AMP + diphosphate. The enzyme catalyses [ThiS sulfur-carrier protein]-C-terminal Gly-Gly-AMP + S-sulfanyl-L-cysteinyl-[cysteine desulfurase] + AH2 = [ThiS sulfur-carrier protein]-C-terminal-Gly-aminoethanethioate + L-cysteinyl-[cysteine desulfurase] + A + AMP + 2 H(+). The protein operates within cofactor biosynthesis; thiamine diphosphate biosynthesis. Catalyzes the ATP-dependent transfer of a sulfur to tRNA to produce 4-thiouridine in position 8 of tRNAs, which functions as a near-UV photosensor. Also catalyzes the transfer of sulfur to the sulfur carrier protein ThiS, forming ThiS-thiocarboxylate. This is a step in the synthesis of thiazole, in the thiamine biosynthesis pathway. The sulfur is donated as persulfide by IscS. The polypeptide is Probable tRNA sulfurtransferase (Staphylococcus aureus (strain MRSA252)).